The primary structure comprises 336 residues: Ketol-acid reductoisomerase (NADP(+)) (336 aa).

Positions 1-181 (MKVYYDQDAD…GGGRSGIIET (181 aa)) constitute a KARI N-terminal Rossmann domain. Residues 24 to 27 (YGSQ), Arg-47, Ser-50, and Ser-52 contribute to the NADP(+) site. His-107 is an active-site residue. Gly-133 is a binding site for NADP(+). The KARI C-terminal knotted domain maps to 182-327 (SFREETETDL…ERLRGMMPWI (146 aa)). Residues Asp-190, Glu-194, Glu-226, and Glu-230 each contribute to the Mg(2+) site. Residue Ser-251 participates in substrate binding.

It belongs to the ketol-acid reductoisomerase family. Mg(2+) is required as a cofactor.

The enzyme catalyses (2R)-2,3-dihydroxy-3-methylbutanoate + NADP(+) = (2S)-2-acetolactate + NADPH + H(+). It carries out the reaction (2R,3R)-2,3-dihydroxy-3-methylpentanoate + NADP(+) = (S)-2-ethyl-2-hydroxy-3-oxobutanoate + NADPH + H(+). It functions in the pathway amino-acid biosynthesis; L-isoleucine biosynthesis; L-isoleucine from 2-oxobutanoate: step 2/4. It participates in amino-acid biosynthesis; L-valine biosynthesis; L-valine from pyruvate: step 2/4. Functionally, involved in the biosynthesis of branched-chain amino acids (BCAA). Catalyzes an alkyl-migration followed by a ketol-acid reduction of (S)-2-acetolactate (S2AL) to yield (R)-2,3-dihydroxy-isovalerate. In the isomerase reaction, S2AL is rearranged via a Mg-dependent methyl migration to produce 3-hydroxy-3-methyl-2-ketobutyrate (HMKB). In the reductase reaction, this 2-ketoacid undergoes a metal-dependent reduction by NADPH to yield (R)-2,3-dihydroxy-isovalerate. This chain is Ketol-acid reductoisomerase (NADP(+)), found in Halorhodospira halophila (strain DSM 244 / SL1) (Ectothiorhodospira halophila (strain DSM 244 / SL1)).